A 695-amino-acid polypeptide reads, in one-letter code: Follicle-stimulating hormone receptor (695 aa).

Residues 1 to 17 (MALLLVSLLAFLSLGSG) form the signal peptide. Intrachain disulfides connect Cys18–Cys25 and Cys23–Cys32. An LRRNT domain is found at 18–46 (CHHRICHCSNRVFLCQESKVTEIPSDLPR). At 18–366 (CHHRICHCSN…EDIMGYNILR (349 aa)) the chain is on the extracellular side. LRR repeat units lie at residues 49–72 (IELRFVLTKLRVIQKGAFSGFGDL), 73–97 (EKIEISQNDVLEVIEADVFSNLPKL), 98–118 (HEIRIEKANNLLYINPEAFQN), 119–143 (LPNLQYLLISNTGIKHLPDVHKIHS), 144–169 (LQKVLLDIQDNINIHTIERNSFVGLS), 170–192 (FESVILWLNKNGIQEIHNCAFNG), 193–216 (TQLDELNLSDNNNLEELPNDVFHG), 217–240 (ASGPVILDISRTRIHSLPSYGLEN), and 241–259 (LKKLRARSTYNLKKLPTLE). N-linked (GlcNAc...) asparagine glycosylation is found at Asn191 and Asn199. 4 disulfide bridges follow: Cys275/Cys346, Cys276/Cys292, Cys276/Cys356, and Cys292/Cys338. Asn293 and Asn318 each carry an N-linked (GlcNAc...) asparagine glycan. Position 335 is a sulfotyrosine (Tyr335). Residues 367–387 (VLIWFISILAITGNIIVLVIL) form a helical membrane-spanning segment. At 388-398 (TTSQYKLTVPR) the chain is on the cytoplasmic side. The helical transmembrane segment at 399–421 (FLMCNLAFADLCIGIYLLLIASV) threads the bilayer. Residues 422-443 (DIHTKSQYHNYAIDWQTGAGCD) lie on the Extracellular side of the membrane. The cysteines at positions 442 and 517 are disulfide-linked. A helical transmembrane segment spans residues 444–465 (AAGFFTVFASELSVYTLTAITL). Residues 466–485 (ERWHTITHAMQLDCKVQLRH) are Cytoplasmic-facing. The chain crosses the membrane as a helical span at residues 486-508 (AASVMVMGWIFAFAAALFPIFGI). Residues 509 to 528 (SSYMKVSICLPMDIDSPLSQ) are Extracellular-facing. A helical membrane pass occupies residues 529-550 (LYVMSLLVLNVLAFVVICGCYI). The Cytoplasmic segment spans residues 551–573 (HIYLTVRNPNIVSSSSDTRIAKR). A helical membrane pass occupies residues 574 to 597 (MAMLIFTDFLCMAPISFFAISASL). Topologically, residues 598–608 (KVPLITVSKAK) are extracellular. A helical transmembrane segment spans residues 609–630 (ILLVLFHPINSCANPFLYAIFT). The Cytoplasmic segment spans residues 631–695 (KNFRRDFFIL…LVPLSHLAQN (65 aa)).

Belongs to the G-protein coupled receptor 1 family. FSH/LSH/TSH subfamily. Homotrimer. Functions as a homotrimer binding the FSH hormone heterodimer composed of CGA and FSHB. Interacts with ARRB2. Interacts with APPL2; interaction is independent of follicle stimulating hormone stimulation. In terms of processing, sulfated. Post-translationally, N-glycosylated; indirectly required for FSH-binding, possibly via a conformational change that allows high affinity binding of hormone. In terms of tissue distribution, sertoli cells and ovarian granulosa cells.

Its subcellular location is the cell membrane. Its function is as follows. G protein-coupled receptor for follitropin, the follicle-stimulating hormone. Through cAMP production activates the downstream PI3K-AKT and ERK1/ERK2 signaling pathways. The protein is Follicle-stimulating hormone receptor (FSHR) of Homo sapiens (Human).